Consider the following 310-residue polypeptide: D-alanine--D-alanine ligase (310 aa).

In terms of domain architecture, ATP-grasp spans Lys-104–Gln-305. Leu-135 to Thr-190 is a binding site for ATP. Mg(2+) contacts are provided by Asp-259, Glu-272, and Asn-274.

It belongs to the D-alanine--D-alanine ligase family. It depends on Mg(2+) as a cofactor. The cofactor is Mn(2+).

It is found in the cytoplasm. It catalyses the reaction 2 D-alanine + ATP = D-alanyl-D-alanine + ADP + phosphate + H(+). It functions in the pathway cell wall biogenesis; peptidoglycan biosynthesis. Its function is as follows. Cell wall formation. The protein is D-alanine--D-alanine ligase of Magnetococcus marinus (strain ATCC BAA-1437 / JCM 17883 / MC-1).